The primary structure comprises 182 residues: Large ribosomal subunit protein uL6 (182 aa).

It belongs to the universal ribosomal protein uL6 family. As to quaternary structure, part of the 50S ribosomal subunit.

Its function is as follows. This protein binds to the 23S rRNA, and is important in its secondary structure. It is located near the subunit interface in the base of the L7/L12 stalk, and near the tRNA binding site of the peptidyltransferase center. The sequence is that of Large ribosomal subunit protein uL6 from Dehalococcoides mccartyi (strain ATCC BAA-2100 / JCM 16839 / KCTC 5957 / BAV1).